A 263-amino-acid polypeptide reads, in one-letter code: Tryptophan synthase alpha chain (263 aa).

Catalysis depends on proton acceptor residues Glu50 and Asp61.

The protein belongs to the TrpA family. As to quaternary structure, tetramer of two alpha and two beta chains.

It carries out the reaction (1S,2R)-1-C-(indol-3-yl)glycerol 3-phosphate + L-serine = D-glyceraldehyde 3-phosphate + L-tryptophan + H2O. It functions in the pathway amino-acid biosynthesis; L-tryptophan biosynthesis; L-tryptophan from chorismate: step 5/5. Its function is as follows. The alpha subunit is responsible for the aldol cleavage of indoleglycerol phosphate to indole and glyceraldehyde 3-phosphate. In Clostridium acetobutylicum (strain ATCC 824 / DSM 792 / JCM 1419 / IAM 19013 / LMG 5710 / NBRC 13948 / NRRL B-527 / VKM B-1787 / 2291 / W), this protein is Tryptophan synthase alpha chain.